Here is a 445-residue protein sequence, read N- to C-terminus: GTPase Der (445 aa).

EngA-type G domains are found at residues 2–166 (FRVA…PEYE) and 182–355 (IKVA…NQAW). GTP is bound by residues 8–15 (GIPNVGKS), 55–59 (DTGGY), 118–121 (NKID), 188–195 (GKPNAGKS), 235–239 (DTAGM), and 300–303 (NKID). In terms of domain architecture, KH-like spans 356–440 (KRVGTGQLNR…PIKLIFRGKE (85 aa)).

Belongs to the TRAFAC class TrmE-Era-EngA-EngB-Septin-like GTPase superfamily. EngA (Der) GTPase family. Associates with the 50S ribosomal subunit.

In terms of biological role, GTPase that plays an essential role in the late steps of ribosome biogenesis. The chain is GTPase Der from Sulfurihydrogenibium sp. (strain YO3AOP1).